A 529-amino-acid polypeptide reads, in one-letter code: Type I restriction enzyme EcoKI methylase subunit (529 aa).

S-adenosyl-L-methionine contacts are provided by residues 148-153 (QYFTPR), 178-180 (TAG), and Glu216.

Belongs to the N(4)/N(6)-methyltransferase family. In terms of assembly, the type I restriction/modification system is composed of three polypeptides R, M and S. The restriction enzyme has stoichiometry R(2)M(2)S(1). The methyltransferase is composed of M(2)S(1). (Microbial infection) Interacts with Escherichia phage T7 protein Ocr; this interaction leads to the inhibition of the methyltransferase restriction enzyme M.EcoKI composed of M(2)S(1).

It catalyses the reaction a 2'-deoxyadenosine in DNA + S-adenosyl-L-methionine = an N(6)-methyl-2'-deoxyadenosine in DNA + S-adenosyl-L-homocysteine + H(+). Functionally, the subtype gamma methyltransferase (M) subunit of a type I restriction enzyme. The M and S subunits together form a methyltransferase (MTase) that methylates A-2 on the top and A-3 on the bottom strand of the sequence 5'-AACN(6)GTGC-3'. In the presence of the R subunit the complex can also act as an endonuclease, binding to the same target sequence but cutting the DNA some distance from this site. Whether the DNA is cut or modified depends on the methylation state of the target sequence. When the target site is unmodified, the DNA is cut. When the target site is hemimethylated, the complex acts as a maintenance MTase modifying the DNA so that both strands become methylated. After locating a non-methylated recognition site, the enzyme complex serves as a molecular motor that translocates DNA in an ATP-dependent manner until a collision occurs that triggers cleavage. This chain is Type I restriction enzyme EcoKI methylase subunit, found in Escherichia coli (strain K12).